Reading from the N-terminus, the 214-residue chain is MKLQNSQLQPQARYILPSFIEHSSFGVKESNPYNKLFEERIIFLGVQVDDASANDIMAQLLVLESLDPDRDITMYINSPGGGFTSLMAIYDTMQYVRADIQTVCLGQAASAAAVLLAAGTPGKRMALPNARVLIHQPSLAGVIQGQFSDLEIQAAEIERMRTLMETTLSRHTGKDAAVIRKDTDRDKILTAEEAKDYGIIDTVLEYRKLSAQTV.

Residue Ser-110 is the Nucleophile of the active site. His-135 is an active-site residue.

It belongs to the peptidase S14 family. In terms of assembly, fourteen ClpP subunits assemble into 2 heptameric rings which stack back to back to give a disk-like structure with a central cavity, resembling the structure of eukaryotic proteasomes.

It is found in the cytoplasm. It catalyses the reaction Hydrolysis of proteins to small peptides in the presence of ATP and magnesium. alpha-casein is the usual test substrate. In the absence of ATP, only oligopeptides shorter than five residues are hydrolyzed (such as succinyl-Leu-Tyr-|-NHMec, and Leu-Tyr-Leu-|-Tyr-Trp, in which cleavage of the -Tyr-|-Leu- and -Tyr-|-Trp bonds also occurs).. Its function is as follows. Cleaves peptides in various proteins in a process that requires ATP hydrolysis. Has a chymotrypsin-like activity. Plays a major role in the degradation of misfolded proteins. The chain is ATP-dependent Clp protease proteolytic subunit 2 from Mycobacterium leprae (strain TN).